A 93-amino-acid chain; its full sequence is Large ribosomal subunit protein bL27 (93 aa).

The interval 1 to 22 (MAHKKAGGSSRNGRDSAGRRLG) is disordered.

This sequence belongs to the bacterial ribosomal protein bL27 family.

This chain is Large ribosomal subunit protein bL27, found in Parvibaculum lavamentivorans (strain DS-1 / DSM 13023 / NCIMB 13966).